Consider the following 132-residue polypeptide: UPF0102 protein Acel_1550 (132 aa).

The protein belongs to the UPF0102 family.

The protein is UPF0102 protein Acel_1550 of Acidothermus cellulolyticus (strain ATCC 43068 / DSM 8971 / 11B).